The following is a 529-amino-acid chain: T-complex protein 1 subunit beta (529 aa).

The protein belongs to the TCP-1 chaperonin family. As to quaternary structure, heterooligomeric complex of about 850 to 900 kDa that forms two stacked rings, 12 to 16 nm in diameter.

The protein localises to the cytoplasm. In terms of biological role, molecular chaperone; assists the folding of proteins upon ATP hydrolysis. Known to play a role, in vitro, in the folding of actin and tubulin. In Caenorhabditis elegans, this protein is T-complex protein 1 subunit beta (cct-2).